Reading from the N-terminus, the 394-residue chain is Dual-specificity RNA methyltransferase RlmN (394 aa).

Glu-115 acts as the Proton acceptor in catalysis. A Radical SAM core domain is found at 121 to 360 (EADRATLCVS…VIVRKTRGDD (240 aa)). A disulfide bridge connects residues Cys-128 and Cys-365. Residues Cys-135, Cys-139, and Cys-142 each contribute to the [4Fe-4S] cluster site. Residues 189-190 (GE), Ser-221, 243-245 (SLH), and Asn-322 contribute to the S-adenosyl-L-methionine site. The active-site S-methylcysteine intermediate is Cys-365.

The protein belongs to the radical SAM superfamily. RlmN family. The cofactor is [4Fe-4S] cluster.

The protein resides in the cytoplasm. The catalysed reaction is adenosine(2503) in 23S rRNA + 2 reduced [2Fe-2S]-[ferredoxin] + 2 S-adenosyl-L-methionine = 2-methyladenosine(2503) in 23S rRNA + 5'-deoxyadenosine + L-methionine + 2 oxidized [2Fe-2S]-[ferredoxin] + S-adenosyl-L-homocysteine. It catalyses the reaction adenosine(37) in tRNA + 2 reduced [2Fe-2S]-[ferredoxin] + 2 S-adenosyl-L-methionine = 2-methyladenosine(37) in tRNA + 5'-deoxyadenosine + L-methionine + 2 oxidized [2Fe-2S]-[ferredoxin] + S-adenosyl-L-homocysteine. Its function is as follows. Specifically methylates position 2 of adenine 2503 in 23S rRNA and position 2 of adenine 37 in tRNAs. m2A2503 modification seems to play a crucial role in the proofreading step occurring at the peptidyl transferase center and thus would serve to optimize ribosomal fidelity. The protein is Dual-specificity RNA methyltransferase RlmN of Pasteurella multocida (strain Pm70).